The chain runs to 506 residues: Zinc finger protein MAGPIE (506 aa).

A disordered region spans residues 1-53; that stretch reads MTTEDQTISSSGGYVQSSSTTDHVDHHHHDQHESLNPPLVKKKRNLPGNPDPE. Residues 9 to 21 are compositionally biased toward low complexity; the sequence is SSSGGYVQSSSTT. The segment covering 22–33 has biased composition (basic and acidic residues); sequence DHVDHHHHDQHE. Serine 60 bears the Phosphoserine mark. C2H2-type zinc fingers lie at residues 70-92 and 111-141; these read FLCEICGKGFQRDQNLQLHRRGH and YVCPEKSCVHHHPTRALGDLTGIKKHFCRKH. The Nuclear localization signal signature appears at 133 to 140; sequence IKKHFCRK. The segment at 146–169 adopts a C2H2-type 2; degenerate zinc-finger fold; the sequence is WKCEKCAKRYAVQSDWKAHSKTCG. Residues cysteine 148, cysteine 151, histidine 164, cysteine 168, cysteine 175, cysteine 177, histidine 190, and cysteine 194 each coordinate Zn(2+). Residues 173–196 form a CCHC-type 2; atypical zinc finger; sequence YRCDCGTIFSRRDSFITHRAFCDA. The interval 183–195 is SHR-binding; sequence RRDSFITHRAFCD.

As to quaternary structure, interacts with SHR, SCR and JKD, but not with itself. Interacts with SIEL. Binds to RGA and SCL3 competitively in the nucleus. As to expression, expressed in the ground tissue and stele cells of embryos and 2-days post-germination roots but not in the quiescent center. Detected only in cells that perform asymmetric cell divisions. In roots, present in cortex, endodermis, and pericycle layer.

The protein localises to the nucleus. In terms of biological role, transcription factor that regulates tissue boundaries and asymmetric cell division. Contributes to the sequestration of 'SHORT-ROOT' to the nucleus. Interacts with the SCR and MGP promoters. Does not show transcription activity by itself, but regulates the transcription of downstream genes through interaction with other transcription factors. Binds DNA via its zinc fingers. Recognizes and binds to SCL3 promoter sequence 5'-AGACAA-3' to promote its expression when in complex with RGA. Positively involved in gibberellic acid (GA) signaling. The chain is Zinc finger protein MAGPIE from Arabidopsis thaliana (Mouse-ear cress).